Reading from the N-terminus, the 783-residue chain is MRWPCSSWFRGLWPEAAPWAVLLALGVPGWVLAVSATVAAVVPEQHVSSAGQAPLDWLLTDRGPFHRAQEYADFMERYRQGFTTRYRIYREFARWKVNNLALERRDFFSLPLPLAPEFVRNIRLLGRRPNLQQVTENLIKKYGTHFLLSATLGGEESLTIFVDKRKLSRKSETTGGIPVVGGTGNSSAVSLETLHQLAASYFIDRESTLRRLHHIQIATGAIKVTETRTGPLGCSNYDNLDSVSSVLVQSPENKVQLLGLQVLLPEHLRERFVAAALSYITCSSEGELVCRENDCWCKCSPTFPECNCPDADIQAMEDSLLQIQDSWATHNRQFEESEEFQTLLKRLPSDRFLNSTAISQYWTMDSNLQHRYQQLGASLKVLLKKMHRIVRRLFNLCKRCHRQPRFRLPKERSLSFWWNRIQSLLYCGESTFPGTFLEQSHSCTCPYDQSSCQGPIPCALGEGPACAHCASDNSTRCGSCNPGYVLAQGLCRPEVAESLENFLGLETDLQDLELKYLLQKRDSRIEVHSIFISNDMRLGSWFDPSWRKRMLLTLKSNKYKPGLVHVMLALSLQICLTKNSTLEPVMAIYVNPFGGSHSESWFMPVNEGNFPDWERTNVDAAAQCQNWTITLGNRWKTFFETVHVYLRSRIKSLDDSSNETIYYEPLEMTDPSKNLGYMKINTLQVFGYSLPFDPDAIRDLILQLDYPYTQGSQDSALLQLIELRDRVNQLSPPGKVRLDLFSCLLRHRLKLANNEVGRIQSSLRAFNSKLPNPVEYETGKLCS.

Residues M1–A33 form the signal peptide. The 197-residue stretch at R85–T281 folds into the MACPF domain. N-linked (GlcNAc...) asparagine glycans are attached at residues N185, N354, N473, N579, N626, and N658.

It belongs to the BRINP family. In terms of tissue distribution, weakly expressed in embryonic stem (ES) cells. Strongly expressed in ES-derived neural stem cells (NSCs).

The protein resides in the secreted. Inhibits neuronal cell proliferation by negative regulation of the cell cycle transition. The protein is BMP/retinoic acid-inducible neural-specific protein 2 (Brinp2) of Mus musculus (Mouse).